A 323-amino-acid polypeptide reads, in one-letter code: Methionyl-tRNA formyltransferase (323 aa).

115–118 (SLLP) serves as a coordination point for (6S)-5,6,7,8-tetrahydrofolate.

It belongs to the Fmt family.

It catalyses the reaction L-methionyl-tRNA(fMet) + (6R)-10-formyltetrahydrofolate = N-formyl-L-methionyl-tRNA(fMet) + (6S)-5,6,7,8-tetrahydrofolate + H(+). Functionally, attaches a formyl group to the free amino group of methionyl-tRNA(fMet). The formyl group appears to play a dual role in the initiator identity of N-formylmethionyl-tRNA by promoting its recognition by IF2 and preventing the misappropriation of this tRNA by the elongation apparatus. This Lactococcus lactis subsp. cremoris (strain SK11) protein is Methionyl-tRNA formyltransferase.